A 235-amino-acid chain; its full sequence is REF/SRPP-like protein At2g47780 (235 aa).

The span at 1-12 shows a compositional bias: acidic residues; the sequence is MAEDEIVVEEEQ. The interval 1-32 is disordered; that stretch reads MAEDEIVVEEEQSQPQEITPVPPSSSSSPSLV.

Belongs to the REF/SRPP family.

This chain is REF/SRPP-like protein At2g47780, found in Arabidopsis thaliana (Mouse-ear cress).